Here is a 1214-residue protein sequence, read N- to C-terminus: BOS complex subunit NOMO1 (1214 aa).

A signal peptide spans 1–23 (MRAGRCAAALLLLLLSGAGRAIG). At 24-1150 (SEDIVVGCGG…RKLPEQDIAQ (1127 aa)) the chain is on the extracellular side. N42, N210, and N610 each carry an N-linked (GlcNAc...) asparagine glycan. Residues 692–720 (KSAQELRREQQLAEIETRRQEREKNGKEE) are a coiled coil. Residues 708–726 (TRRQEREKNGKEEGEEGRA) are compositionally biased toward basic and acidic residues. Residues 708–733 (TRRQEREKNGKEEGEEGRARPPGQEM) are disordered. A helical membrane pass occupies residues 1151–1167 (GSYIALPLTLLLLLAGY). Residues 1168–1214 (NHDKLIPLLLQLTSRLQGVRALGQAASDSSGPEDMKRQTKKQKTRRT) are Cytoplasmic-facing. Residues 1190–1214 (GQAASDSSGPEDMKRQTKKQKTRRT) form a disordered region. A phosphoserine mark is found at S1196 and S1197. Residues 1205 to 1214 (QTKKQKTRRT) are compositionally biased toward basic residues.

In terms of assembly, component of the back of Sec61 (BOS) complex, composed of NCLN/Nicalin, NOMO (NOMO1, NOMO2 or NOMO3) and TMEM147. The BOS complex is part of the multi-pass translocon (MPT) complex, composed of three subcomplexes, the GEL complex (composed of RAB5IF/OPTI and TMCO1), the BOS complex (composed of NCLN/Nicalin, NOMO and TMEM147) and the PAT complex (composed of WDR83OS/Asterix and CCDC47). The MPT complex associates with the SEC61 complex.

The protein resides in the endoplasmic reticulum membrane. In terms of biological role, component of the multi-pass translocon (MPT) complex that mediates insertion of multi-pass membrane proteins into the lipid bilayer of membranes. The MPT complex takes over after the SEC61 complex: following membrane insertion of the first few transmembrane segments of proteins by the SEC61 complex, the MPT complex occludes the lateral gate of the SEC61 complex to promote insertion of subsequent transmembrane regions. The protein is BOS complex subunit NOMO1 of Mus musculus (Mouse).